Here is a 138-residue protein sequence, read N- to C-terminus: Molluscan insulin-related peptide 5 (138 aa).

The first 31 residues, 1–31 (MAGVRLVFTKAFMVTVLLTLLLNIGVKPAEG), serve as a signal peptide directing secretion. The residue at position 32 (glutamine 32) is a Pyrrolidone carboxylic acid. Intrachain disulfides connect cysteine 48–cysteine 124, cysteine 60–cysteine 137, and cysteine 123–cysteine 128. Positions 72–84 (DAETGWLLPETMV) are cleaved as a propeptide — C-beta peptide like. The propeptide at 87 to 111 (NAQTDLDDPLRNIKLSSESALTYLT) is C-alpha peptide like. Glutamine 114 is modified (pyrrolidone carboxylic acid).

The protein belongs to the insulin family. In terms of assembly, heterodimer of a B chain and an A chain linked by two disulfide bonds. As to expression, expressed in the cerebral light-green cells which are giant neuroendocrines cells involved in the control of growth.

It localises to the cytoplasmic vesicle. Its subcellular location is the secretory vesicle. The chain is Molluscan insulin-related peptide 5 from Lymnaea stagnalis (Great pond snail).